Consider the following 232-residue polypeptide: Ribose-5-phosphate isomerase A (232 aa).

Residues 28–31, 83–86, and 96–99 contribute to the substrate site; these read TGST, DGAD, and KGGG. The active-site Proton acceptor is the glutamate 105. Lysine 123 contributes to the substrate binding site.

Belongs to the ribose 5-phosphate isomerase family. As to quaternary structure, homodimer.

It catalyses the reaction aldehydo-D-ribose 5-phosphate = D-ribulose 5-phosphate. It participates in carbohydrate degradation; pentose phosphate pathway; D-ribose 5-phosphate from D-ribulose 5-phosphate (non-oxidative stage): step 1/1. Catalyzes the reversible conversion of ribose-5-phosphate to ribulose 5-phosphate. This chain is Ribose-5-phosphate isomerase A, found in Rhodopseudomonas palustris (strain HaA2).